The sequence spans 404 residues: Protein ARK2N (404 aa).

Composition is skewed to basic and acidic residues over residues Met1–Glu12 and Ser23–Asp32. Disordered regions lie at residues Met1–Thr50 and Arg63–Asp255. Ser66 is subject to Phosphoserine. Ser67 carries the phosphoserine; by AMPK modification. The segment covering Ser87–Glu121 has biased composition (polar residues). 3 positions are modified to phosphoserine: Ser143, Ser145, and Ser147. The span at Ala169 to Arg187 shows a compositional bias: basic residues. Positions Arg175 to Leu200 form a coiled coil. The segment at Gln202 to Val226 is required for interaction with CSNK2B. The span at Asp203–Ser219 shows a compositional bias: low complexity. Residues Ser327, Ser328, and Ser330 each carry the phosphoserine modification. Arg347 is modified (omega-N-methylarginine). Lys358 is covalently cross-linked (Glycyl lysine isopeptide (Lys-Gly) (interchain with G-Cter in SUMO2)).

In terms of assembly, interacts with CSNK2B (via KSSR). Interacts with JUN; the interaction is mediated by CSNK2B. Post-translationally, phosphorylated at Ser-67 by AMPK. In skeletal muscle, phosphorylation is induced by exercise and seems to increase muscle contractile function. As to expression, expressed in skeletal muscle.

It localises to the nucleus. In terms of biological role, AMPK substrate important for exercise capacity and skeletal muscle function. Required for normal contraction-induced signaling. (Microbial infection) Upon Epstein-Barr virus (EBV) infection, suppresses viral BZLF1 expression and subsequent EBV reactivation by interacting with JUN and inhibiting its transcriptional activator activity on BZLF1 Z promoter. This Homo sapiens (Human) protein is Protein ARK2N.